Consider the following 95-residue polypeptide: UPF0381 protein HI_0400 (95 aa).

Belongs to the UPF0381 family.

This is UPF0381 protein HI_0400 from Haemophilus influenzae (strain ATCC 51907 / DSM 11121 / KW20 / Rd).